Consider the following 274-residue polypeptide: Thiamine kinase (274 aa).

Belongs to the thiamine kinase family.

The catalysed reaction is thiamine + ATP = thiamine phosphate + ADP + H(+). The protein operates within cofactor biosynthesis; thiamine diphosphate biosynthesis; thiamine phosphate from thiamine: step 1/1. Catalyzes the ATP-dependent phosphorylation of thiamine to thiamine phosphate. Is involved in thiamine salvage. The chain is Thiamine kinase from Shigella flexneri serotype 5b (strain 8401).